The primary structure comprises 124 residues: KESAAAKFZRZHMBSSTSSASSSNYCNQMMKSRNLTQDRCKPVNTFVHESLADVQAVCSQKNVQCKNGQTNCYQSYSTMSITDCRETGSSKYPNCAYKTTQAQKHIIVACEGNPYVPVHFDASV.

Substrate contacts are provided by lysine 7 and arginine 10. The active-site Proton acceptor is the histidine 12. 4 disulfides stabilise this stretch: cysteine 26/cysteine 84, cysteine 40/cysteine 95, cysteine 58/cysteine 110, and cysteine 65/cysteine 72. N-linked (GlcNAc...) asparagine glycosylation is present at asparagine 34. Residues 41–45 (KPVNT), lysine 66, and arginine 85 contribute to the substrate site. The active-site Proton donor is the histidine 119.

Belongs to the pancreatic ribonuclease family. Monomer. Interacts with and forms tight 1:1 complexes with RNH1. Dimerization of two such complexes may occur. Interaction with RNH1 inhibits this protein. Pancreas.

Its subcellular location is the secreted. It catalyses the reaction an [RNA] containing cytidine + H2O = an [RNA]-3'-cytidine-3'-phosphate + a 5'-hydroxy-ribonucleotide-3'-[RNA].. The catalysed reaction is an [RNA] containing uridine + H2O = an [RNA]-3'-uridine-3'-phosphate + a 5'-hydroxy-ribonucleotide-3'-[RNA].. Endonuclease that catalyzes the cleavage of RNA on the 3' side of pyrimidine nucleotides. Acts on single-stranded and double-stranded RNA. The polypeptide is Ribonuclease pancreatic (RNASE1) (Eudorcas thomsonii (Thomson's gazelle)).